The chain runs to 500 residues: Tektin-like protein 1 (500 aa).

Positions 1–25 (MPVLLPSTDRDQDSRVGAPEWHQAA) are disordered. Phosphoserine is present on S14. Residues 198 to 229 (MLVWEREELKSMKRKMEKDMERSEALLKALAS) are a coiled coil. Residues 265 to 286 (VDITRPPTPRTQGLKTPPPDPV) are disordered. Residue Y372 is modified to Phosphotyrosine. A coiled-coil region spans residues 422–448 (LTRHNLQMEKNLKELRTTHDNLAWSLN).

As to quaternary structure, microtubule inner protein component of sperm flagellar doublet microtubules.

It is found in the cytoplasm. Its subcellular location is the cytoskeleton. The protein resides in the flagellum axoneme. Functionally, microtubule inner protein (MIP) part of the dynein-decorated doublet microtubules (DMTs) in sperm flagellar axoneme, which is required for motile flagellum beating. Forms an extensive interaction network cross-linking the lumen of axonemal doublet microtubules. In Rattus norvegicus (Rat), this protein is Tektin-like protein 1.